A 244-amino-acid chain; its full sequence is Ubiquinone/menaquinone biosynthesis C-methyltransferase UbiE (244 aa).

Residues T70, D91, and 117–118 (DA) contribute to the S-adenosyl-L-methionine site.

It belongs to the class I-like SAM-binding methyltransferase superfamily. MenG/UbiE family.

The catalysed reaction is a 2-demethylmenaquinol + S-adenosyl-L-methionine = a menaquinol + S-adenosyl-L-homocysteine + H(+). It catalyses the reaction a 2-methoxy-6-(all-trans-polyprenyl)benzene-1,4-diol + S-adenosyl-L-methionine = a 5-methoxy-2-methyl-3-(all-trans-polyprenyl)benzene-1,4-diol + S-adenosyl-L-homocysteine + H(+). Its pathway is quinol/quinone metabolism; menaquinone biosynthesis; menaquinol from 1,4-dihydroxy-2-naphthoate: step 2/2. It participates in cofactor biosynthesis; ubiquinone biosynthesis. Methyltransferase required for the conversion of demethylmenaquinol (DMKH2) to menaquinol (MKH2) and the conversion of 2-polyprenyl-6-methoxy-1,4-benzoquinol (DDMQH2) to 2-polyprenyl-3-methyl-6-methoxy-1,4-benzoquinol (DMQH2). The chain is Ubiquinone/menaquinone biosynthesis C-methyltransferase UbiE from Chromobacterium violaceum (strain ATCC 12472 / DSM 30191 / JCM 1249 / CCUG 213 / NBRC 12614 / NCIMB 9131 / NCTC 9757 / MK).